Reading from the N-terminus, the 153-residue chain is Small ribosomal subunit protein bS16 (153 aa).

The tract at residues 114–153 (ENEPVGEAITPKKKKAKAEDAEAAADAPAEAAAESEAADK) is disordered. Residues 137–153 (AADAPAEAAAESEAADK) show a composition bias toward low complexity.

This sequence belongs to the bacterial ribosomal protein bS16 family.

The chain is Small ribosomal subunit protein bS16 from Rhodococcus opacus (strain B4).